Reading from the N-terminus, the 254-residue chain is Type III pantothenate kinase (254 aa).

7-14 (DVGNTRLK) contributes to the ATP binding site. Substrate contacts are provided by residues Y96 and 103-106 (GSDR). Residue D105 is the Proton acceptor of the active site. Residue T133 participates in ATP binding. T183 lines the substrate pocket.

It belongs to the type III pantothenate kinase family. In terms of assembly, homodimer. The cofactor is NH4(+). K(+) serves as cofactor.

The protein resides in the cytoplasm. The enzyme catalyses (R)-pantothenate + ATP = (R)-4'-phosphopantothenate + ADP + H(+). The protein operates within cofactor biosynthesis; coenzyme A biosynthesis; CoA from (R)-pantothenate: step 1/5. Functionally, catalyzes the phosphorylation of pantothenate (Pan), the first step in CoA biosynthesis. This chain is Type III pantothenate kinase, found in Paracidovorax citrulli (strain AAC00-1) (Acidovorax citrulli).